We begin with the raw amino-acid sequence, 316 residues long: Olfactory receptor 2H1 (316 aa).

Topologically, residues 1 to 23 (MVNQSSPMGFLLLGFSEHPALER) are extracellular. N-linked (GlcNAc...) asparagine glycosylation occurs at N3. A helical membrane pass occupies residues 24–47 (TLFVVVFTSYLLTLVGNTLIILLS). Residues 48 to 55 (VLYPRLHS) lie on the Cytoplasmic side of the membrane. The chain crosses the membrane as a helical span at residues 56–77 (PMYFFLSDLSFLDLCFTTSCVP). Residues 78 to 98 (QMLVNLWGPKKTISFLGCSVQ) lie on the Extracellular side of the membrane. The cysteines at positions 95 and 187 are disulfide-linked. A helical transmembrane segment spans residues 99–118 (LFIFLSLGTTECILLTVMAF). Topologically, residues 119 to 137 (DRYVAVCQPLHYATIIHPR) are cytoplasmic. A helical transmembrane segment spans residues 138–156 (LCWQLASVAWVMSLVQSIV). Topologically, residues 157 to 193 (QTPSTLHLPFCPHQQIDDFLCEVPSLIRLSCGDTSYN) are extracellular. A helical membrane pass occupies residues 194-217 (EIQLAVSSVIFVVVPLSLILASYG). Over 218–234 (ATAQAVLRINSATAWRK) the chain is Cytoplasmic. A helical transmembrane segment spans residues 235-257 (AFGTCSSHLTVVTLFYSSVIAVY). Residues 258–270 (LQPKNPYAQGRGK) lie on the Extracellular side of the membrane. A helical membrane pass occupies residues 271–290 (FFGLFYAVGTPSLNPLVYTL). At 291–316 (RNKEIKRALRRLLGKERDSRESWRAA) the chain is on the cytoplasmic side.

Belongs to the G-protein coupled receptor 1 family.

Its subcellular location is the cell membrane. Odorant receptor. This Homo sapiens (Human) protein is Olfactory receptor 2H1 (OR2H1).